The sequence spans 117 residues: UPF0145 protein CV_4322 (117 aa).

The protein belongs to the UPF0145 family.

The sequence is that of UPF0145 protein CV_4322 from Chromobacterium violaceum (strain ATCC 12472 / DSM 30191 / JCM 1249 / CCUG 213 / NBRC 12614 / NCIMB 9131 / NCTC 9757 / MK).